The sequence spans 92 residues: Small ribosomal subunit protein uS19c (92 aa).

It belongs to the universal ribosomal protein uS19 family.

The protein resides in the plastid. Its function is as follows. Protein S19 forms a complex with S13 that binds strongly to the 16S ribosomal RNA. The polypeptide is Small ribosomal subunit protein uS19c (Cuscuta reflexa (Southern Asian dodder)).